The following is a 389-amino-acid chain: Tryptophan 2,3-dioxygenase (389 aa).

Residues 60 to 64 and Arg131 each bind substrate; that span reads FIITH. Residue His316 participates in heme binding. Substrate is bound at residue Thr331.

The protein belongs to the tryptophan 2,3-dioxygenase family. As to quaternary structure, homotetramer. Dimer of dimers. The cofactor is heme.

The catalysed reaction is L-tryptophan + O2 = N-formyl-L-kynurenine. Its pathway is amino-acid degradation; L-tryptophan degradation via kynurenine pathway; L-kynurenine from L-tryptophan: step 1/2. It functions in the pathway pigment biosynthesis; ommochrome biosynthesis. Heme-dependent dioxygenase that catalyzes the oxidative cleavage of the L-tryptophan (L-Trp) pyrrole ring and converts L-tryptophan to N-formyl-L-kynurenine. Catalyzes the oxidative cleavage of the indole moiety. The polypeptide is Tryptophan 2,3-dioxygenase (Mayetiola destructor (Hessian fly)).